The primary structure comprises 218 residues: Flagellar calcium-binding protein TB-24 (218 aa).

Positions 1–27 are disordered; the sequence is MGCSASKDTTNSKDGAASKGGKDGKTT. EF-hand domains lie at 48-83, 84-119, 130-165, and 167-202; these read ESKS…ILKL, DEFT…LVEF, YDIF…LKEW, and VDIT…KKLQ. Ca(2+)-binding residues include Asp-61, Asn-63, Thr-65, Lys-67, and Glu-72. The Ca(2+) site is built by Asp-143, Asp-145, Ser-147, Glu-154, Asp-180, Asn-182, Ser-184, and Glu-191.

It belongs to the calflagin family.

Its subcellular location is the cell projection. The protein resides in the cilium. It is found in the flagellum. In terms of biological role, may contribute to the rapid motility of the trypanosomes, playing a role either in flagellar structure or in calcium metabolism. Could alternate between a GDP-bound inactive form to a calcium/GTP-bound active form. In Trypanosoma brucei brucei, this protein is Flagellar calcium-binding protein TB-24.